Here is a 158-residue protein sequence, read N- to C-terminus: Cyclic pyranopterin monophosphate synthase (158 aa).

Residues 73 to 75 (LCH) and 110 to 111 (ME) contribute to the substrate site. Asp125 is an active-site residue.

Belongs to the MoaC family. In terms of assembly, homohexamer; trimer of dimers.

The enzyme catalyses (8S)-3',8-cyclo-7,8-dihydroguanosine 5'-triphosphate = cyclic pyranopterin phosphate + diphosphate. The protein operates within cofactor biosynthesis; molybdopterin biosynthesis. Catalyzes the conversion of (8S)-3',8-cyclo-7,8-dihydroguanosine 5'-triphosphate to cyclic pyranopterin monophosphate (cPMP). The protein is Cyclic pyranopterin monophosphate synthase of Ectopseudomonas mendocina (strain ymp) (Pseudomonas mendocina).